The primary structure comprises 95 residues: Protein TusB (95 aa).

This sequence belongs to the DsrH/TusB family. In terms of assembly, heterohexamer, formed by a dimer of trimers. The hexameric TusBCD complex contains 2 copies each of TusB, TusC and TusD. The TusBCD complex interacts with TusE.

It is found in the cytoplasm. Its function is as follows. Part of a sulfur-relay system required for 2-thiolation of 5-methylaminomethyl-2-thiouridine (mnm(5)s(2)U) at tRNA wobble positions. This is Protein TusB from Cronobacter sakazakii (strain ATCC BAA-894) (Enterobacter sakazakii).